Reading from the N-terminus, the 739-residue chain is Alcohol dehydrogenase (quinone), dehydrogenase subunit (739 aa).

The N-terminal stretch at 1-35 (MISAVFGKRRSLSRTLTAGTICAALISGYATMASA) is a signal peptide. Glu-97 is a pyrroloquinoline quinone binding site. Residues Cys-143 and Cys-144 are joined by a disulfide bond. Pyrroloquinoline quinone is bound at residue Arg-149. Glu-217 lines the Ca(2+) pocket. Thr-279 contributes to the pyrroloquinoline quinone binding site. Residues Asn-299 and Asp-344 each contribute to the Ca(2+) site. Asp-344 serves as the catalytic Proton acceptor. Pyrroloquinoline quinone contacts are provided by Lys-371 and Ile-585. The Cytochrome c domain maps to 635–739 (FDSKRTDNGY…NADGIPEQLP (105 aa)). 4 residues coordinate heme c: Cys-651, Cys-654, His-655, and Met-694.

Belongs to the bacterial PQQ dehydrogenase family. As to quaternary structure, the alcohol dehydrogenase multicomponent enzyme system is composed of a dehydrogenase subunit I (AdhA) and a cytochrome c subunit II (AdhB). The cofactor is pyrroloquinoline quinone. Ca(2+) serves as cofactor. Heme c is required as a cofactor.

Its subcellular location is the cell membrane. The enzyme catalyses ethanol + a ubiquinone = a ubiquinol + acetaldehyde. In terms of biological role, dehydrogenase component of the alcohol dehydrogenase multicomponent enzyme system which is involved in the production of acetic acid and in the ethanol oxidase respiratory chain. Quinohemoprotein alcohol dehydrogenase (ADH) catalyzes the oxidation of ethanol to acetaldehyde by transferring electrons to the ubiquinone embedded in the membrane phospholipids. The electrons transfer from ethanol to membranous ubiquinone occurs from pyrroloquinoline quinone (PQQ) to one heme c in subunit I (AdhA), and finally to two heme c in subunit II (AdhB). Besides ubiquinone reduction, ADH also has a ubiquinol (QH2) oxidation reaction which mediates electron transfer from ubiquinol to the non-energy generating bypass oxidase system. The electrons transfer occurs from ubiquinol (QH2) to the additional heme c within subunit II (AdhB). This Komagataeibacter europaeus (Gluconacetobacter europaeus) protein is Alcohol dehydrogenase (quinone), dehydrogenase subunit.